The chain runs to 111 residues: Cytochrome c (111 aa).

Alanine 1 carries the post-translational modification N-acetylalanine. Residues cysteine 22, cysteine 25, and histidine 26 each contribute to the heme c site. Lysine 80 bears the N6,N6,N6-trimethyllysine mark. A heme c-binding site is contributed by methionine 88. An N6,N6,N6-trimethyllysine modification is found at lysine 94.

Belongs to the cytochrome c family. Binds 1 heme c group covalently per subunit.

Its subcellular location is the mitochondrion intermembrane space. Electron carrier protein. The oxidized form of the cytochrome c heme group can accept an electron from the heme group of the cytochrome c1 subunit of cytochrome reductase. Cytochrome c then transfers this electron to the cytochrome oxidase complex, the final protein carrier in the mitochondrial electron-transport chain. In Sesamum indicum (Oriental sesame), this protein is Cytochrome c.